Consider the following 523-residue polypeptide: ATP-dependent RNA helicase DBP3 (523 aa).

Positions 1–21 (MTKEEIADKKRKVVDEEVIEK) are enriched in basic and acidic residues. Residues 1–71 (MTKEEIADKK…SEKKPEPTSA (71 aa)) form a disordered region. Residues 22–48 (KKSKKHKKDKKDKKEKKDKKHKKHKKE) show a composition bias toward basic residues. Residues 49-67 (KKGEKEVEVPEKESEKKPE) are compositionally biased toward basic and acidic residues. The short motif at 114 to 140 (LSFDYLSLDSSIQAEISKFPKPTPIQA) is the Q motif element. Positions 143 to 315 (WPYLLSGKDV…STFMNNPIKV (173 aa)) constitute a Helicase ATP-binding domain. 156-163 (AETGSGKT) is a binding site for ATP. The DEAD box signature appears at 262-265 (DEAD). Positions 344–493 (KLLELLKKYH…PVPEDLIKFG (150 aa)) constitute a Helicase C-terminal domain.

Belongs to the DEAD box helicase family. DDX5/DBP2 subfamily.

It is found in the nucleus. It localises to the nucleolus. The catalysed reaction is ATP + H2O = ADP + phosphate + H(+). Its function is as follows. ATP-dependent RNA helicase required for 60S ribosomal subunit synthesis. Involved in efficient pre-rRNA processing, predominantly at site A3, which is necessary for the normal formation of 25S and 5.8S rRNAs. The sequence is that of ATP-dependent RNA helicase DBP3 (DBP3) from Saccharomyces cerevisiae (strain ATCC 204508 / S288c) (Baker's yeast).